The primary structure comprises 44 residues: SPbeta prophage-derived uncharacterized protein YosI (44 aa).

The sequence is that of SPbeta prophage-derived uncharacterized protein YosI (yosI) from Bacillus subtilis (strain 168).